Reading from the N-terminus, the 87-residue chain is MSLRNISMITKNLQTTAKCYVPKSSPTSTTIPVIRDASTTQCRRITTVINITSLKGYSPSPRTVHDKPIVICTDNEEVETVSEHVKV.

This is an uncharacterized protein from Saccharomyces cerevisiae (strain ATCC 204508 / S288c) (Baker's yeast).